A 297-amino-acid polypeptide reads, in one-letter code: ATP phosphoribosyltransferase (297 aa).

Met-1 bears the N-acetylmethionine mark.

It belongs to the ATP phosphoribosyltransferase family.

It localises to the cytoplasm. The enzyme catalyses 1-(5-phospho-beta-D-ribosyl)-ATP + diphosphate = 5-phospho-alpha-D-ribose 1-diphosphate + ATP. It functions in the pathway amino-acid biosynthesis; L-histidine biosynthesis; L-histidine from 5-phospho-alpha-D-ribose 1-diphosphate: step 1/9. Its function is as follows. Catalyzes the condensation of ATP and 5-phosphoribose 1-diphosphate to form N'-(5'-phosphoribosyl)-ATP (PR-ATP). Has a crucial role in the pathway because the rate of histidine biosynthesis seems to be controlled primarily by regulation of the enzymatic activity. The sequence is that of ATP phosphoribosyltransferase (HIS1) from Saccharomyces cerevisiae (strain ATCC 204508 / S288c) (Baker's yeast).